A 183-amino-acid polypeptide reads, in one-letter code: Ubiquinol-cytochrome c reductase iron-sulfur subunit (183 aa).

A helical transmembrane segment spans residues 21-41 (LIYGTTAVGAVGVALAVWPFI). A Rieske domain is found at 88 to 181 (IVVARAVDPA…YAFTDDTTVL (94 aa)). C121, H123, C145, and H148 together coordinate [2Fe-2S] cluster. C126 and C147 are oxidised to a cystine.

The protein belongs to the Rieske iron-sulfur protein family. The main subunits of complex b-c1 are: cytochrome b, cytochrome c1 and the Rieske protein. The cofactor is [2Fe-2S] cluster.

The protein localises to the cell inner membrane. It carries out the reaction a quinol + 2 Fe(III)-[cytochrome c](out) = a quinone + 2 Fe(II)-[cytochrome c](out) + 2 H(+)(out). Its function is as follows. Component of the ubiquinol-cytochrome c reductase complex (complex III or cytochrome b-c1 complex), which is a respiratory chain that generates an electrochemical potential coupled to ATP synthesis. In Rhodospirillum rubrum, this protein is Ubiquinol-cytochrome c reductase iron-sulfur subunit (petA).